The chain runs to 206 residues: Cytochrome c oxidase assembly protein CtaG (206 aa).

The Cytoplasmic segment spans residues 1-12 (MSKKPAGKNSNR). A helical; Signal-anchor for type II membrane protein transmembrane segment spans residues 13 to 35 (IVAAVCLAFFTGMIGMAYAAVPL). The Periplasmic segment spans residues 36–206 (YKMFCQATGY…ISDTEANLGG (171 aa)). A disordered region spans residues 184-206 (VASSEPVQGTSKIISDTEANLGG). Residues 188 to 206 (EPVQGTSKIISDTEANLGG) are compositionally biased toward polar residues.

Belongs to the COX11/CtaG family.

Its subcellular location is the cell inner membrane. Exerts its effect at some terminal stage of cytochrome c oxidase synthesis, probably by being involved in the insertion of the copper B into subunit I. The polypeptide is Cytochrome c oxidase assembly protein CtaG (Mesorhizobium japonicum (strain LMG 29417 / CECT 9101 / MAFF 303099) (Mesorhizobium loti (strain MAFF 303099))).